Consider the following 236-residue polypeptide: Ribose-5-phosphate isomerase A (236 aa).

Substrate is bound by residues 33–36 (TGST), 90–93 (DGAD), and 103–106 (KGGG). E112 (proton acceptor) is an active-site residue. Residue K130 participates in substrate binding.

It belongs to the ribose 5-phosphate isomerase family. In terms of assembly, homodimer.

It catalyses the reaction aldehydo-D-ribose 5-phosphate = D-ribulose 5-phosphate. It participates in carbohydrate degradation; pentose phosphate pathway; D-ribose 5-phosphate from D-ribulose 5-phosphate (non-oxidative stage): step 1/1. In terms of biological role, catalyzes the reversible conversion of ribose-5-phosphate to ribulose 5-phosphate. This Trichormus variabilis (strain ATCC 29413 / PCC 7937) (Anabaena variabilis) protein is Ribose-5-phosphate isomerase A.